A 366-amino-acid polypeptide reads, in one-letter code: Transcription factor MYB61 (366 aa).

2 HTH myb-type domains span residues 9–61 (KQKL…INYL) and 62–116 (RPDL…KKKL). 2 consecutive DNA-binding regions (H-T-H motif) follow at residues 37–61 (WSSVPKLAGLQRCGKSCRLRWINYL) and 89–112 (WSQIASRLPGRTDNEIKNLWNSSI). The segment at 115-164 (KLKQRGIDPNTHKPISEVESFSDKDKPTTSNNKRSGNDHKSPSSSSATNQ) is disordered. The segment covering 124–141 (NTHKPISEVESFSDKDKP) has biased composition (basic and acidic residues).

Expressed specifically in guard cells. Expressed in sink tissues, such as xylem, roots and developing seeds.

It localises to the nucleus. Functionally, transcription factor that coordinates a small network of downstream target genes required for several aspects of plant growth and development, such as xylem formation and xylem cell differentiation, and lateral root formation. Regulates a specific set of target genes by binding DNA to the AC cis-element 5'-ACCTAC-3'. Functions as a transcriptional regulator of stomatal closure. Plays a role the regulation of stomatal pore size independently of abscisic acid (ABA). Required for seed coat mucilage deposition during the development of the seed coat epidermis. Involved in the induction of trichome initiation and branching by positively regulating GL1 and GL2. Required for gibberellin (GA) biosynthesis and degradation by positively affecting the expression of the enzymes that convert GA9 into the bioactive GA4, as well as the enzymes involved in the degradation of GA4. This chain is Transcription factor MYB61, found in Arabidopsis thaliana (Mouse-ear cress).